We begin with the raw amino-acid sequence, 256 residues long: 5'-nucleotidase SurE (256 aa).

A divalent metal cation is bound by residues Asp-9, Asp-10, Ser-40, and Asn-94.

The protein belongs to the SurE nucleotidase family. The cofactor is a divalent metal cation.

Its subcellular location is the cytoplasm. The catalysed reaction is a ribonucleoside 5'-phosphate + H2O = a ribonucleoside + phosphate. Its function is as follows. Nucleotidase that shows phosphatase activity on nucleoside 5'-monophosphates. This is 5'-nucleotidase SurE from Campylobacter fetus subsp. fetus (strain 82-40).